The chain runs to 2327 residues: Acetyl-CoA carboxylase 2 (2327 aa).

A disordered region spans residues 1-62 (MTSTHVATLG…NGGVSDSKKL (62 aa)). One can recognise a Biotin carboxylation domain in the interval 134 to 641 (PIHSVLVANN…HTGWLDTRIA (508 aa)). Positions 287-481 (ECCLDSIPDE…AAQVAVGMGI (195 aa)) constitute an ATP-grasp domain. 313 to 370 (CQVVGYPAMIKASWGGGGKGIRKVHNDDEVRTLFKQVQGEVPGSPIFIMRLAAQSRHL) lines the ATP pocket. Mg(2+) is bound by residues Glu436, Glu450, and Asn452. Mn(2+) contacts are provided by Glu436, Glu450, and Asn452. Arg454 is a catalytic residue. The Biotinyl-binding domain occupies 768 to 842 (LQNDHDPSKL…QAGDLIARLD (75 aa)). Lys809 bears the N6-biotinyllysine mark. The CoA carboxyltransferase N-terminal domain maps to 1568 to 1909 (PYQPLSVIDL…YIGGPLPVTT (342 aa)). The segment at 1568–2227 (PYQPLSVIDL…EDVLAKEIRA (660 aa)) is carboxyltransferase. CoA-binding residues include Arg1818, Lys2119, and Arg2121. The CoA carboxyltransferase C-terminal domain occupies 1913–2227 (PPDRPVAYIP…EDVLAKEIRA (315 aa)).

In terms of assembly, homodimer. Biotin is required as a cofactor. Requires Mg(2+) as cofactor. The cofactor is Mn(2+).

Its subcellular location is the cytoplasm. It is found in the cytosol. It carries out the reaction hydrogencarbonate + acetyl-CoA + ATP = malonyl-CoA + ADP + phosphate + H(+). The enzyme catalyses N(6)-biotinyl-L-lysyl-[protein] + hydrogencarbonate + ATP = N(6)-carboxybiotinyl-L-lysyl-[protein] + ADP + phosphate + H(+). It participates in lipid metabolism; malonyl-CoA biosynthesis; malonyl-CoA from acetyl-CoA: step 1/1. Multifunctional enzyme that catalyzes the carboxylation of acetyl-CoA, forming malonyl-CoA, which is used in the plastid for fatty acid synthesis and in the cytosol in various biosynthetic pathways including fatty acid elongation. The chain is Acetyl-CoA carboxylase 2 (ACC2) from Oryza sativa subsp. japonica (Rice).